A 354-amino-acid polypeptide reads, in one-letter code: Hyaluronan and proteoglycan link protein 1 (354 aa).

The propeptide occupies 1–15 (MKSLLLLVLISFCWA). N21 and N56 each carry an N-linked (GlcNAc...) asparagine glycan. In terms of domain architecture, Ig-like V-type spans 38–152 (PRLLVEAEQA…EGLEDDTAVV (115 aa)). 5 disulfide bridges follow: C61–C139, C181–C252, C205–C226, C279–C349, and C304–C325. 2 consecutive Link domains span residues 159 to 254 (VVFP…FCFT) and 259 to 351 (GRFY…YCFR).

The protein belongs to the HAPLN family.

It localises to the secreted. It is found in the extracellular space. Its subcellular location is the extracellular matrix. Functionally, stabilizes the aggregates of proteoglycan monomers with hyaluronic acid in the extracellular cartilage matrix. This is Hyaluronan and proteoglycan link protein 1 (HAPLN1) from Bos taurus (Bovine).